A 392-amino-acid polypeptide reads, in one-letter code: L-serine phosphate decarboxylase (392 aa).

A required for catalytic activity region spans residues Asn-22–Ser-29. Asn-180 contributes to the O-phospho-L-serine binding site. An N6-(pyridoxal phosphate)lysine modification is found at Lys-243. 2 residues coordinate O-phospho-L-serine: Arg-354 and Arg-368.

It belongs to the class-II pyridoxal-phosphate-dependent aminotransferase family. As to quaternary structure, homodimer. Pyridoxal 5'-phosphate is required as a cofactor.

The catalysed reaction is O-phospho-L-serine + H(+) = phosphoethanolamine + CO2. It functions in the pathway cofactor biosynthesis. Its function is as follows. Pyridoxal phosphate (PLP)-dependent decarboxylase involved in the biosynthesis of norcobamides, cofactors in the tetrachloroethene reductive dehalogenase PceA of S.multivorans. Catalyzes the decarboxylation of L-serine O-phosphate to ethanolamine O-phosphate, the precursor for the linkage between the nucleotide loop and the corrin ring in norcobamide. Less active with L-threonine phosphate. No activity with L-serine or L-threonine. Has no aminotransferase activity as no production of L-glutamate with L-histidinol phosphate and 2-oxoglutarate as substrates. Complements growth defects in the S.enterica cobD deletion mutant, but of the cobamides, the norpseudo-vitamin B12 (norpseudo-B12) rather than the pseudo-B12 is produced in the mutant. However, addition of L-threonine phosphate to the culture minimal medium of the mutant results in formation of also the pseudo-B12, indicating the dual substrate specificity of this enzyme. The sequence is that of L-serine phosphate decarboxylase from Sulfurospirillum multivorans (strain DM 12446 / JCM 15788 / NBRC 109480).